Consider the following 292-residue polypeptide: UTP--glucose-1-phosphate uridylyltransferase (292 aa).

The protein belongs to the UDPGP type 2 family.

The catalysed reaction is alpha-D-glucose 1-phosphate + UTP + H(+) = UDP-alpha-D-glucose + diphosphate. In terms of biological role, may play a role in stationary phase survival. In Mycoplasma genitalium (strain ATCC 33530 / DSM 19775 / NCTC 10195 / G37) (Mycoplasmoides genitalium), this protein is UTP--glucose-1-phosphate uridylyltransferase (galU).